A 734-amino-acid chain; its full sequence is Ribosomal RNA large subunit methyltransferase K/L (734 aa).

A THUMP domain is found at 49–167 (HAYRICMWSR…KTEHTYCLDL (119 aa)).

This sequence belongs to the methyltransferase superfamily. RlmKL family.

It is found in the cytoplasm. The catalysed reaction is guanosine(2445) in 23S rRNA + S-adenosyl-L-methionine = N(2)-methylguanosine(2445) in 23S rRNA + S-adenosyl-L-homocysteine + H(+). It carries out the reaction guanosine(2069) in 23S rRNA + S-adenosyl-L-methionine = N(2)-methylguanosine(2069) in 23S rRNA + S-adenosyl-L-homocysteine + H(+). Specifically methylates the guanine in position 2445 (m2G2445) and the guanine in position 2069 (m7G2069) of 23S rRNA. The chain is Ribosomal RNA large subunit methyltransferase K/L from Acinetobacter baumannii (strain ACICU).